The primary structure comprises 368 residues: 1-deoxy-D-xylulose 5-phosphate reductoisomerase (368 aa).

NADPH contacts are provided by Thr-10, Gly-11, Ser-12, Ile-13, Gln-38, and Asn-100. Lys-101 is a 1-deoxy-D-xylulose 5-phosphate binding site. Residue Glu-102 participates in NADPH binding. A Mn(2+)-binding site is contributed by Asp-125. 4 residues coordinate 1-deoxy-D-xylulose 5-phosphate: Ser-126, Glu-127, Ser-151, and His-172. Glu-127 lines the Mn(2+) pocket. Gly-178 is a binding site for NADPH. 1-deoxy-D-xylulose 5-phosphate contacts are provided by Ser-185, Asn-190, Lys-191, and Glu-194. Glu-194 is a binding site for Mn(2+).

It belongs to the DXR family. Mg(2+) serves as cofactor. It depends on Mn(2+) as a cofactor.

It catalyses the reaction 2-C-methyl-D-erythritol 4-phosphate + NADP(+) = 1-deoxy-D-xylulose 5-phosphate + NADPH + H(+). It functions in the pathway isoprenoid biosynthesis; isopentenyl diphosphate biosynthesis via DXP pathway; isopentenyl diphosphate from 1-deoxy-D-xylulose 5-phosphate: step 1/6. Catalyzes the NADPH-dependent rearrangement and reduction of 1-deoxy-D-xylulose-5-phosphate (DXP) to 2-C-methyl-D-erythritol 4-phosphate (MEP). The sequence is that of 1-deoxy-D-xylulose 5-phosphate reductoisomerase from Tropheryma whipplei (strain TW08/27) (Whipple's bacillus).